Reading from the N-terminus, the 487-residue chain is MTVQTAQIVKNYIGGEWVESISTKMEAVYNPATGEVIAQVPLSTKVDVEQAVLAANEAFKSWSKTAVPRRARILFKYQQLLVDNWEELAKLITIENGKSYNEAYGEVLRGIECVEFAAGAPTLMMGKQLPDIATGIESGMYRYPIGVIGGITPFNFPMMVPCWMFPLAIACGNTFVLKPSERTPLLAARLAELAEEAGLPKGVLNIVNGAHDVVNGLLEHKLVKAISFVGSQPVAEYVYKKGTENLKRVQALAGAKNHSIVLNDANLELATKQIISAAFGSAGERCMAASVVTVEEEIADQLVERLVAEANKIVIGNGLDEDVFLGPVIRDNHKERTIGYIDSGVEQGATLVRDGREDTAVKGAGYFVGPTIFDHVTKEMKIWQDEIFAPVLSIVRVKSLDEAIEIANESRFANGACIYTDSGASVRQFRETIESGMLGVNVGVPAPMAFFPFSGWKDSFYGDLHANGTDGVEFYTRKKMLTSRWEK.

The NAD(+) site is built by phenylalanine 154, lysine 178, glutamate 181, arginine 182, and serine 231. The active-site Nucleophile is cysteine 286. NAD(+) is bound at residue glutamate 386.

This sequence belongs to the aldehyde dehydrogenase family. IolA subfamily. Homotetramer.

It carries out the reaction 3-oxopropanoate + NAD(+) + CoA + H2O = hydrogencarbonate + acetyl-CoA + NADH + H(+). The catalysed reaction is 2-methyl-3-oxopropanoate + NAD(+) + CoA + H2O = propanoyl-CoA + hydrogencarbonate + NADH + H(+). The protein operates within polyol metabolism; myo-inositol degradation into acetyl-CoA; acetyl-CoA from myo-inositol: step 7/7. In terms of biological role, catalyzes the oxidation of malonate semialdehyde (MSA) and methylmalonate semialdehyde (MMSA) into acetyl-CoA and propanoyl-CoA, respectively. Is involved in a myo-inositol catabolic pathway. Bicarbonate, and not CO2, is the end-product of the enzymatic reaction. The chain is Malonate-semialdehyde dehydrogenase 2 from Bacillus anthracis.